A 916-amino-acid polypeptide reads, in one-letter code: Protein translocase subunit SecA (916 aa).

ATP contacts are provided by residues Gln87, 105-109 (GEGKT), and Asp507. Zn(2+) contacts are provided by Cys900, Cys902, Cys911, and His912.

This sequence belongs to the SecA family. As to quaternary structure, monomer and homodimer. Part of the essential Sec protein translocation apparatus which comprises SecA, SecYEG and auxiliary proteins SecDF-YajC and YidC. It depends on Zn(2+) as a cofactor.

The protein localises to the cell inner membrane. It localises to the cytoplasm. The enzyme catalyses ATP + H2O + cellular proteinSide 1 = ADP + phosphate + cellular proteinSide 2.. Functionally, part of the Sec protein translocase complex. Interacts with the SecYEG preprotein conducting channel. Has a central role in coupling the hydrolysis of ATP to the transfer of proteins into and across the cell membrane, serving both as a receptor for the preprotein-SecB complex and as an ATP-driven molecular motor driving the stepwise translocation of polypeptide chains across the membrane. The protein is Protein translocase subunit SecA of Neisseria meningitidis serogroup A / serotype 4A (strain DSM 15465 / Z2491).